We begin with the raw amino-acid sequence, 413 residues long: Eukaryotic initiation factor 4A-7 (413 aa).

The Q motif motif lies at 40–68; that stretch reads DSFDAMGLQENLLRGIYAYGFEKPSAIQQ. Positions 71–241 constitute a Helicase ATP-binding domain; sequence IVPFCKGLDV…RKFMNKPVRI (171 aa). 84-91 provides a ligand contact to ATP; it reads AQSGTGKT. The DEAD box motif lies at 189–192; the sequence is DEAD. The region spanning 252 to 413 is the Helicase C-terminal domain; it reads GIKQFYVNVD…ELPANVADLL (162 aa).

This sequence belongs to the DEAD box helicase family. eIF4A subfamily. As to quaternary structure, eIF4F is a multi-subunit complex, the composition of which varies with external and internal environmental conditions. It is composed of at least EIF4A, EIF4E and EIF4G.

It carries out the reaction ATP + H2O = ADP + phosphate + H(+). In terms of biological role, ATP-dependent RNA helicase which is a subunit of the eIF4F complex involved in cap recognition and is required for mRNA binding to ribosome. In the current model of translation initiation, eIF4A unwinds RNA secondary structures in the 5'-UTR of mRNAs which is necessary to allow efficient binding of the small ribosomal subunit, and subsequent scanning for the initiator codon. This is Eukaryotic initiation factor 4A-7 from Nicotiana tabacum (Common tobacco).